Consider the following 495-residue polypeptide: MAIDQPIKKRGRPPGSKNTKNKMEQKMELVHQRLALLDSSSGSDRDDDIGPRAIIIDCDEDDTDDVMEVVPLKMLMPKEVENEQRTVPGIPQTCNTQNTSNGRTNTTEVPVKGQNKCASYLPKKSSVQAFCGSAMKRAQEIQTKLPAEHPSFVKHMLHSHVVSGFWLGLPAGFCNKYLPKHDTDIVLEDENGNNHNTNYLGGKQGLSAGWRGFAINHDIKVGDVVVFELVSTTKFKVHIIRDKNISPTDRAPGLKSFYACKKRKISKEATDNATKPKEDPETTRVSSKVAHDDTQNLVHEAIDGIRFSDSEMSFDDVMSYSNFNIVVDGLVIDCKFPDHQRRTYYELCCAQKSFLHRHLLRQLSLTLVVGVIMETINIAEGIRACGAGTSSQEDFLIWKKTLQSFDLLGMNVAFLLKRVDDILGLPEQPRDPSECSKYNELKLERSRAGEKVKALESMMLTVKDVLKKIDAEMEEMESSVRNHDIALRKIATAPW.

2 disordered regions span residues 1 to 25 (MAID…KMEQ) and 88 to 108 (PGIP…NTTE). A compositionally biased stretch (polar residues) spans 92-108 (QTCNTQNTSNGRTNTTE). A DNA-binding region (TF-B3) is located at residues 152–243 (FVKHMLHSHV…KFKVHIIRDK (92 aa)). The segment covering 268 to 282 (EATDNATKPKEDPET) has biased composition (basic and acidic residues). Residues 268–289 (EATDNATKPKEDPETTRVSSKV) form a disordered region.

It is found in the nucleus. This chain is B3 domain-containing protein Os01g0234100, found in Oryza sativa subsp. japonica (Rice).